The primary structure comprises 758 residues: 5-methyltetrahydropteroyltriglutamate--homocysteine methyltransferase (758 aa).

5-methyltetrahydropteroyltri-L-glutamate-binding positions include 16–19 and lysine 112; that span reads RELK. Residues 433–435 and glutamate 486 contribute to the L-homocysteine site; that span reads IGS. Residues 433-435 and glutamate 486 contribute to the L-methionine site; that span reads IGS. 5-methyltetrahydropteroyltri-L-glutamate is bound by residues 517 to 518 and tryptophan 563; that span reads RC. Aspartate 601 lines the L-homocysteine pocket. Residue aspartate 601 coordinates L-methionine. Glutamate 607 is a 5-methyltetrahydropteroyltri-L-glutamate binding site. Zn(2+)-binding residues include histidine 643, cysteine 645, and glutamate 667. The Proton donor role is filled by histidine 696. A Zn(2+)-binding site is contributed by cysteine 728.

It belongs to the vitamin-B12 independent methionine synthase family. Zn(2+) serves as cofactor.

It catalyses the reaction 5-methyltetrahydropteroyltri-L-glutamate + L-homocysteine = tetrahydropteroyltri-L-glutamate + L-methionine. Its pathway is amino-acid biosynthesis; L-methionine biosynthesis via de novo pathway; L-methionine from L-homocysteine (MetE route): step 1/1. Its function is as follows. Catalyzes the transfer of a methyl group from 5-methyltetrahydrofolate to homocysteine resulting in methionine formation. The protein is 5-methyltetrahydropteroyltriglutamate--homocysteine methyltransferase of Neisseria meningitidis serogroup A / serotype 4A (strain DSM 15465 / Z2491).